Here is a 218-residue protein sequence, read N- to C-terminus: Serine/threonine-protein phosphatase 2 (218 aa).

Mn(2+) contacts are provided by aspartate 22, histidine 24, aspartate 51, and asparagine 77. Histidine 78 serves as the catalytic Proton donor. Histidine 187 is a binding site for Mn(2+).

Belongs to the PPP phosphatase family. PP-1 subfamily. Mn(2+) serves as cofactor.

The enzyme catalyses O-phospho-L-seryl-[protein] + H2O = L-seryl-[protein] + phosphate. It catalyses the reaction O-phospho-L-threonyl-[protein] + H2O = L-threonyl-[protein] + phosphate. Its activity is regulated as follows. Inhibited by cadmium, copper, zinc when added activity but with less efficiency. Can hydrolyze phosphorylated Ser-, Thr- or Tyr-substrates in vitro. The natural substrate is unknown. The chain is Serine/threonine-protein phosphatase 2 (pphB) from Salmonella typhimurium (strain LT2 / SGSC1412 / ATCC 700720).